The sequence spans 568 residues: COMPASS component cclA (568 aa).

The tract at residues 1–113 (MASDSGTPPP…MRYKLAPPKP (113 aa)) is disordered. Composition is skewed to basic and acidic residues over residues 68–77 (KESLKKRESK) and 89–98 (PDPKHREPKQ). The region spanning 160–353 (ADPGFPSSLY…IPIRFKQHIY (194 aa)) is the B30.2/SPRY domain.

Belongs to the cclA family. In terms of assembly, component of the COMPASS complex.

The protein localises to the nucleus. Its subcellular location is the chromosome. It is found in the telomere. Component of the COMPASS (Set1C) complex that specifically mono-, di- and trimethylates histone H3 to form H3K4me1/2/3, which subsequently plays a role in telomere length maintenance and transcription elongation regulation. Controls the production of several secondary metabolites, including colletochlorins, higginsianins and sclerosporide. Plays a key role in mycelial growth, sporulation, spore germination and virulence. The sequence is that of COMPASS component cclA from Colletotrichum higginsianum (strain IMI 349063) (Crucifer anthracnose fungus).